The sequence spans 63 residues: MPIAQIHILEGRSDEQKETLIREVSEAISRSLDAPLTSVRVIITEMPKVHFGIGGESAKAIGR.

The Proton acceptor; via imino nitrogen role is filled by P2.

This sequence belongs to the 4-oxalocrotonate tautomerase family. Homohexamer.

It carries out the reaction (2Z,4E)-2-hydroxyhexa-2,4-dienedioate = (3E)-2-oxohex-3-enedioate. Its pathway is aromatic compound metabolism; salicylate degradation. Catalyzes the ketonization of 2-hydroxymuconate stereoselectively to yield 2-oxo-3-hexenedioate. This Stutzerimonas stutzeri (Pseudomonas stutzeri) protein is 2-hydroxymuconate tautomerase (nahJ).